Reading from the N-terminus, the 155-residue chain is Ribosomal RNA large subunit methyltransferase H (155 aa).

Residues leucine 72, glycine 103, and 122-127 (LSDLTL) contribute to the S-adenosyl-L-methionine site.

It belongs to the RNA methyltransferase RlmH family. In terms of assembly, homodimer.

The protein localises to the cytoplasm. It catalyses the reaction pseudouridine(1915) in 23S rRNA + S-adenosyl-L-methionine = N(3)-methylpseudouridine(1915) in 23S rRNA + S-adenosyl-L-homocysteine + H(+). Functionally, specifically methylates the pseudouridine at position 1915 (m3Psi1915) in 23S rRNA. This chain is Ribosomal RNA large subunit methyltransferase H, found in Polaromonas naphthalenivorans (strain CJ2).